We begin with the raw amino-acid sequence, 340 residues long: Manganese-dependent ADP-ribose/CDP-alcohol diphosphatase (340 aa).

Methionine 1 carries the post-translational modification N-acetylmethionine. Positions 25, 27, 74, 110, 241, 278, and 280 each coordinate Zn(2+).

The protein belongs to the ADPRibase-Mn family. As to quaternary structure, monomer. The cofactor is Mg(2+).

It catalyses the reaction CDP-choline + H2O = phosphocholine + CMP + 2 H(+). The catalysed reaction is ADP-D-ribose + H2O = D-ribose 5-phosphate + AMP + 2 H(+). The enzyme catalyses CDP-glycerol + H2O = sn-glycerol 3-phosphate + CMP + 2 H(+). Hydrolyzes ADP-ribose, IDP-ribose, CDP-glycerol, CDP-choline and CDP-ethanolamine, but not other non-reducing ADP-sugars or CDP-glucose. May be involved in immune cell signaling as suggested by the second-messenger role of ADP-ribose, which activates TRPM2 as a mediator of oxidative/nitrosative stress. This Mus musculus (Mouse) protein is Manganese-dependent ADP-ribose/CDP-alcohol diphosphatase (Adprm).